A 287-amino-acid polypeptide reads, in one-letter code: MPNLIRTGLLMAALTALFVAIGYWIGRGAGAAIALAFAAAGNFVAYWVSDRAVLAMYGAQPANQAAFPRLVAQVDRLASKAGLPPPRVYVIDNDQPNAFATGRNPQHAAIAVTTGLLGALDEAELAGVIAHELSHIRHRDTLTMTVTATLAGAIGMISNLAIFFGGSDERRSSPFAGIAGLLLLLLAPLTATLVQLAISRTREYAADARAASLTGQPLALARALMRIDEMARWVPNDDAERNPATASLFIVNPLSGTTFDTLFATHPPIRERVARLRHMAQFDVSKN.

2 helical membrane passes run I5–I25 and G28–V48. H131 is a binding site for Zn(2+). The active site involves E132. H135 serves as a coordination point for Zn(2+). The next 2 helical transmembrane spans lie at V146–G166 and P174–V194. E203 serves as a coordination point for Zn(2+).

It belongs to the peptidase M48B family. The cofactor is Zn(2+).

The protein localises to the cell inner membrane. The polypeptide is Protease HtpX homolog (Acidiphilium cryptum (strain JF-5)).